We begin with the raw amino-acid sequence, 72 residues long: Small proline-rich protein 2D (72 aa).

A compositionally biased stretch (low complexity) spans 1–11; it reads MSYQQQQCKQP. The interval 1–20 is disordered; the sequence is MSYQQQQCKQPCQPPPVCPT. 3 repeat units span residues 21 to 29, 30 to 38, and 39 to 47. Positions 21–47 are 3 X 9 AA tandem repeats of P-K-C-P-[EQ]-P-C-P-[PS]; that stretch reads PKCPEPCPPPKCPEPCPSPKCPQPCPP. Pro residues-rich tracts occupy residues 33 to 47 and 56 to 72; these read PEPCPSPKCPQPCPP and PVTPSPPCQPKCPPKSK. Residues 33 to 72 form a disordered region; it reads PEPCPSPKCPQPCPPQQCQQKYPPVTPSPPCQPKCPPKSK.

It belongs to the cornifin (SPRR) family.

Its subcellular location is the cytoplasm. Cross-linked envelope protein of keratinocytes. It is a keratinocyte protein that first appears in the cell cytosol, but ultimately becomes cross-linked to membrane proteins by transglutaminase. All that results in the formation of an insoluble envelope beneath the plasma membrane. The sequence is that of Small proline-rich protein 2D (SPRR2D) from Homo sapiens (Human).